A 490-amino-acid chain; its full sequence is Ribosomal L1 domain-containing protein 1 (490 aa).

Methionine 1 is subject to N-acetylmethionine. Residues 1–27 (MEDSASASLSSAAATGTSTSTPAAPTA) are compositionally biased toward low complexity. Positions 1-33 (MEDSASASLSSAAATGTSTSTPAAPTARKQLDK) are disordered. Residues lysine 120 and lysine 254 each participate in a glycyl lysine isopeptide (Lys-Gly) (interchain with G-Cter in SUMO2) cross-link. Basic residues predominate over residues 280–293 (LNKKKKEARRKRRE). Positions 280–313 (LNKKKKEARRKRRERNFEKQKERKKKRQQARKTA) form a coiled coil. Residues 280–490 (LNKKKKEARR…PKKPKVPQST (211 aa)) are disordered. The span at 329 to 343 (TVKKPESKKEQTPEH) shows a compositional bias: basic and acidic residues. Threonine 340 is modified (phosphothreonine). A compositionally biased stretch (basic residues) spans 344–353 (GKKKRGRGKA). Position 358 is a phosphothreonine (threonine 358). At serine 361 the chain carries Phosphoserine. Threonine 375 carries the phosphothreonine modification. The span at 376-385 (PANEKVEIQK) shows a compositional bias: basic and acidic residues. Lysine 380 participates in a covalent cross-link: Glycyl lysine isopeptide (Lys-Gly) (interchain with G-Cter in SUMO2). Phosphoserine occurs at positions 392 and 396. Threonine 415 and threonine 423 each carry phosphothreonine. The residue at position 427 (serine 427) is a Phosphoserine. The segment covering 427-460 (SPEKKPKIKEEAVKEKSPSLGKKDARQTPKKPEA) has biased composition (basic and acidic residues). Lysine 435 is covalently cross-linked (Glycyl lysine isopeptide (Lys-Gly) (interchain with G-Cter in SUMO2)). Serine 443 is subject to Phosphoserine. Lysine 461 is covalently cross-linked (Glycyl lysine isopeptide (Lys-Gly) (interchain with G-Cter in SUMO2)). Phosphothreonine is present on threonine 465. Residue lysine 468 is modified to N6-acetyllysine. Serine 469 is modified (phosphoserine). Over residues 469 to 490 (SVRKASHTPKKWPKKPKVPQST) the composition is skewed to basic residues.

It belongs to the universal ribosomal protein uL1 family. Highly divergent. In terms of assembly, interacts with ING1 (isoform 2). Interacts with KPNA7 and KPNA2. Expressed at high intensities in the heart, skeletal muscle, and placenta.

The protein resides in the nucleus. It localises to the nucleolus. Its function is as follows. Regulates cellular senescence through inhibition of PTEN translation. Acts as a pro-apoptotic regulator in response to DNA damage. The chain is Ribosomal L1 domain-containing protein 1 (RSL1D1) from Homo sapiens (Human).